Consider the following 230-residue polypeptide: Complex I assembly factor TMEM126B, mitochondrial (230 aa).

A run of 4 helical transmembrane segments spans residues 70–92 (LNIH…ANLV), 107–126 (YASL…KLFV), 139–161 (SCVL…ALAF), and 196–218 (AMAI…HYNI).

This sequence belongs to the TMEM126 family. Part of the mitochondrial complex I assembly/MCIA complex that comprises at least the core subunits TMEM126B, NDUFAF1, ECSIT and ACAD9 and complement subunits such as COA1 and TMEM186. Associates with the intermediate 370 kDa subcomplex of incompletely assembled complex I. Interacts with TMEM70.

It localises to the mitochondrion membrane. Functionally, as part of the MCIA complex, involved in the assembly of the mitochondrial complex I. Participates in constructing the membrane arm of complex I. The sequence is that of Complex I assembly factor TMEM126B, mitochondrial from Mus musculus (Mouse).